A 73-amino-acid chain; its full sequence is MQKLIILLLVAAVLMSTQAVLQEKRPKEKIKFLSKRKTDAEKQQKRLCPDYTDPCSHAHECCSWNCYNGHCTG.

The N-terminal stretch at 1 to 19 is a signal peptide; the sequence is MQKLIILLLVAAVLMSTQA. Residues 20 to 44 constitute a propeptide that is removed on maturation; the sequence is VLQEKRPKEKIKFLSKRKTDAEKQQ. 3 disulfide bridges follow: cysteine 48–cysteine 62, cysteine 55–cysteine 66, and cysteine 61–cysteine 71. A 4-hydroxyproline mark is found at proline 49 and proline 54. At glutamate 60 the chain carries 4-carboxyglutamate. Tryptophan 64 is subject to 6'-bromotryptophan.

Expressed by the venom duct.

Its subcellular location is the secreted. The chain is Conotoxin Asp7/Gla(3)-TxVI from Conus textile (Cloth-of-gold cone).